Reading from the N-terminus, the 209-residue chain is Thiamine-phosphate synthase (209 aa).

Residues 41-45 and N73 contribute to the 4-amino-2-methyl-5-(diphosphooxymethyl)pyrimidine site; that span reads QLREK. Positions 74 and 93 each coordinate Mg(2+). S112 is a binding site for 4-amino-2-methyl-5-(diphosphooxymethyl)pyrimidine. 138-140 contributes to the 2-[(2R,5Z)-2-carboxy-4-methylthiazol-5(2H)-ylidene]ethyl phosphate binding site; sequence TGT. Residue K141 coordinates 4-amino-2-methyl-5-(diphosphooxymethyl)pyrimidine. Residues G168 and 188-189 contribute to the 2-[(2R,5Z)-2-carboxy-4-methylthiazol-5(2H)-ylidene]ethyl phosphate site; that span reads VS.

Belongs to the thiamine-phosphate synthase family. Mg(2+) serves as cofactor.

It catalyses the reaction 2-[(2R,5Z)-2-carboxy-4-methylthiazol-5(2H)-ylidene]ethyl phosphate + 4-amino-2-methyl-5-(diphosphooxymethyl)pyrimidine + 2 H(+) = thiamine phosphate + CO2 + diphosphate. The catalysed reaction is 2-(2-carboxy-4-methylthiazol-5-yl)ethyl phosphate + 4-amino-2-methyl-5-(diphosphooxymethyl)pyrimidine + 2 H(+) = thiamine phosphate + CO2 + diphosphate. The enzyme catalyses 4-methyl-5-(2-phosphooxyethyl)-thiazole + 4-amino-2-methyl-5-(diphosphooxymethyl)pyrimidine + H(+) = thiamine phosphate + diphosphate. It functions in the pathway cofactor biosynthesis; thiamine diphosphate biosynthesis; thiamine phosphate from 4-amino-2-methyl-5-diphosphomethylpyrimidine and 4-methyl-5-(2-phosphoethyl)-thiazole: step 1/1. Its function is as follows. Condenses 4-methyl-5-(beta-hydroxyethyl)thiazole monophosphate (THZ-P) and 2-methyl-4-amino-5-hydroxymethyl pyrimidine pyrophosphate (HMP-PP) to form thiamine monophosphate (TMP). The sequence is that of Thiamine-phosphate synthase from Alkaliphilus oremlandii (strain OhILAs) (Clostridium oremlandii (strain OhILAs)).